We begin with the raw amino-acid sequence, 464 residues long: Glutamyl-tRNA reductase (464 aa).

Substrate contacts are provided by residues 47 to 50 (TCNR), Ser145, 150 to 152 (EPQ), and Gln156. Residue Cys48 is the Nucleophile of the active site. 225-230 (AAGEMN) contributes to the NADP(+) binding site.

This sequence belongs to the glutamyl-tRNA reductase family. Homodimer.

It carries out the reaction (S)-4-amino-5-oxopentanoate + tRNA(Glu) + NADP(+) = L-glutamyl-tRNA(Glu) + NADPH + H(+). Its pathway is porphyrin-containing compound metabolism; protoporphyrin-IX biosynthesis; 5-aminolevulinate from L-glutamyl-tRNA(Glu): step 1/2. In terms of biological role, catalyzes the NADPH-dependent reduction of glutamyl-tRNA(Glu) to glutamate 1-semialdehyde (GSA). This is Glutamyl-tRNA reductase from Psychrobacter cryohalolentis (strain ATCC BAA-1226 / DSM 17306 / VKM B-2378 / K5).